The primary structure comprises 1029 residues: Multidrug resistance protein MdtC (1029 aa).

11 consecutive transmembrane segments (helical) span residues 15-35 (ILLS…LPVA), 333-353 (EVEQ…FLFL), 360-380 (LIPA…MYLC), 387-407 (LSLM…IVAL), 431-451 (VGFT…PLLL), 469-489 (VAIG…CGWL), 528-548 (LVGL…ISIP), 853-873 (VILI…LYES), 897-917 (AFDA…IGIV), 953-973 (PIMM…IASG), and 984-1004 (ITIV…TPVV).

It belongs to the resistance-nodulation-cell division (RND) (TC 2.A.6) family. MdtC subfamily. Part of a tripartite efflux system composed of MdtA, MdtB and MdtC. MdtC forms a heteromultimer with MdtB.

It localises to the cell inner membrane. This is Multidrug resistance protein MdtC from Cronobacter sakazakii (strain ATCC BAA-894) (Enterobacter sakazakii).